Reading from the N-terminus, the 279-residue chain is Shikimate dehydrogenase (NADP(+)) (279 aa).

Residues 16 to 18 (SRS) and Thr63 each bind shikimate. Lys67 serves as the catalytic Proton acceptor. Shikimate-binding residues include Asn88 and Asp103. Residues 128-132 (GAGGA) and Met219 contribute to the NADP(+) site. A shikimate-binding site is contributed by Tyr221. Gly243 contributes to the NADP(+) binding site.

This sequence belongs to the shikimate dehydrogenase family. As to quaternary structure, homodimer.

It carries out the reaction shikimate + NADP(+) = 3-dehydroshikimate + NADPH + H(+). It participates in metabolic intermediate biosynthesis; chorismate biosynthesis; chorismate from D-erythrose 4-phosphate and phosphoenolpyruvate: step 4/7. Its function is as follows. Involved in the biosynthesis of the chorismate, which leads to the biosynthesis of aromatic amino acids. Catalyzes the reversible NADPH linked reduction of 3-dehydroshikimate (DHSA) to yield shikimate (SA). This Aromatoleum aromaticum (strain DSM 19018 / LMG 30748 / EbN1) (Azoarcus sp. (strain EbN1)) protein is Shikimate dehydrogenase (NADP(+)).